A 591-amino-acid polypeptide reads, in one-letter code: Coiled-coil domain-containing protein 148 (591 aa).

Coiled-coil stretches lie at residues 166–195 (VKKQ…SIKI), 352–417 (MLAK…KKKK), and 466–498 (ERRL…KQVA).

This Homo sapiens (Human) protein is Coiled-coil domain-containing protein 148 (CCDC148).